The following is a 264-amino-acid chain: UPF0162 protein PM0557 (264 aa).

It belongs to the UPF0162 family.

This chain is UPF0162 protein PM0557, found in Pasteurella multocida (strain Pm70).